Consider the following 312-residue polypeptide: Olfactory receptor 1500 (312 aa).

Topologically, residues 1-25 (MTGNNQTLILEFLLLGLPIPSEYHL) are extracellular. Asn-5 carries N-linked (GlcNAc...) asparagine glycosylation. The chain crosses the membrane as a helical span at residues 26–49 (LFYALFLAMYLTIILGNLLIIVLV). The Cytoplasmic portion of the chain corresponds to 50 to 57 (RLDSHLHM). Residues 58 to 79 (PMYLFLSNLSFSDLCFSSVTMP) form a helical membrane-spanning segment. At 80-100 (KLLQNMQSQVPSISYTGCLTQ) the chain is on the extracellular side. Cys-97 and Cys-189 are joined by a disulfide. Residues 101 to 120 (LYFFMVFGDMESFLLVVMAY) form a helical membrane-spanning segment. Over 121–139 (DRYVAICFPLRYTTIMSTK) the chain is Cytoplasmic. Residues 140-158 (FCASLVLLLWMLTMTHALL) traverse the membrane as a helical segment. The Extracellular portion of the chain corresponds to 159-196 (HTLLIARLSFCEKNVILHFFCDISALLKLSCSDIYVNE). The chain crosses the membrane as a helical span at residues 197 to 219 (LMIYILGGLIIIIPFLLIVMSYV). Residues 220–236 (RIFFSILKFPSIQDIYK) are Cytoplasmic-facing. A helical membrane pass occupies residues 237 to 260 (VFSTCGSHLSVVTLFYGTIFGIYL). The Extracellular portion of the chain corresponds to 261 to 272 (CPSGNNSTVKEI). Residues 273-292 (AMAMMYTVVTPMLNPFIYSL) traverse the membrane as a helical segment. At 293 to 312 (RNRDMKRALIRVICTKKISL) the chain is on the cytoplasmic side.

Belongs to the G-protein coupled receptor 1 family. In terms of tissue distribution, olfactory epithelium.

Its subcellular location is the cell membrane. In terms of biological role, odorant receptor. This is Olfactory receptor 1500 (Olr1500) from Rattus norvegicus (Rat).